Consider the following 205-residue polypeptide: MLTVAIAKGRLLKSFITYLKQANEQELVDALEKRERQLLISVGSIQIVLVKGSDVPIYVEQGVADVGIVGSDILEEGNYTINNLVDLPFGDCHFALAAKPETSSFNKIATSYVKTARAYFEAQGIDVELVKLSGSIELACLVEMVDGIVDIVQTGTTLKSNGLVEKDTIKPINAKLITNKQSYFKKSSEIDAFLSTLEVSLIDHR.

The protein belongs to the ATP phosphoribosyltransferase family. Short subfamily. In terms of assembly, heteromultimer composed of HisG and HisZ subunits.

The protein localises to the cytoplasm. It carries out the reaction 1-(5-phospho-beta-D-ribosyl)-ATP + diphosphate = 5-phospho-alpha-D-ribose 1-diphosphate + ATP. It participates in amino-acid biosynthesis; L-histidine biosynthesis; L-histidine from 5-phospho-alpha-D-ribose 1-diphosphate: step 1/9. Its function is as follows. Catalyzes the condensation of ATP and 5-phosphoribose 1-diphosphate to form N'-(5'-phosphoribosyl)-ATP (PR-ATP). Has a crucial role in the pathway because the rate of histidine biosynthesis seems to be controlled primarily by regulation of HisG enzymatic activity. In Staphylococcus saprophyticus subsp. saprophyticus (strain ATCC 15305 / DSM 20229 / NCIMB 8711 / NCTC 7292 / S-41), this protein is ATP phosphoribosyltransferase.